The sequence spans 1605 residues: Sister chromatid cohesion protein PDS5 homolog A (1605 aa).

HEAT repeat units follow at residues 50–89 (KSIQ…ITAP), 96–136 (NIMK…YRSC), 146–183 (DLVK…EESE), 184–221 (DVQE…HCAP), 261–298 (QALS…LPGR), 302–339 (EEFD…SDPL), 341–378 (AEAS…SALT), 380–416 (IPVD…VYCL), 552–591 (ANIW…LYDF), 644–681 (SLFD…TIRE), 723–758 (KSLS…IAMP), 821–860 (AGVD…AAKA), 961–1000 (LYPH…QLYL), and 1050–1088 (HAIC…KPSE). Disordered regions lie at residues 1155–1182 (LRAQ…KNDV) and 1203–1262 (ESSN…PKVQ). The span at 1211–1225 (SPSERAEICQRDQKG) shows a compositional bias: basic and acidic residues. Residues 1226 to 1233 (NKRNVGDA) carry the Nuclear localization signal 1 motif. Residue Ser1274 is modified to Phosphoserine. Residues 1279-1295 (NVSLDSHDENSDQEKML) show a composition bias toward basic and acidic residues. 3 disordered regions span residues 1279-1307 (NVSL…KKSL), 1324-1353 (ERSR…SGLA), and 1423-1605 (GKTA…RTAI). Ser1299 is modified (phosphoserine). Basic residues-rich tracts occupy residues 1425–1442 (TAKK…KRSS) and 1464–1476 (KGKR…LKQL). The Nuclear localization signal 2 signature appears at 1426–1433 (AKKSRTSK). Composition is skewed to basic and acidic residues over residues 1477–1495 (HPKD…VESR), 1514–1527 (GEEK…SLKE), and 1534–1574 (VVNK…NEME). Phosphoserine occurs at positions 1524, 1562, and 1584. Over residues 1575–1585 (REAEENAETSD) the composition is skewed to acidic residues. At Thr1588 the chain carries Phosphothreonine.

Belongs to the PDS5 family. In terms of assembly, interacts with the cohesin complex. Interacts with DEK3.

The protein resides in the nucleus. Its function is as follows. Cohesin cofactor dispensable during the meiotic division but playing an important role in DNA repair by homologous recombination (HR) probably by helping SMC5/SMC6 complex. Regulator of sister chromatid cohesion in mitosis which may stabilize cohesin complex association with chromatin. May couple sister chromatid cohesion during mitosis to DNA replication. Cohesion ensures that chromosome partitioning is accurate in both meiotic and mitotic cells and plays an important role in DNA repair. The protein is Sister chromatid cohesion protein PDS5 homolog A of Arabidopsis thaliana (Mouse-ear cress).